The chain runs to 387 residues: Early growth response protein 3 (387 aa).

The tract at residues 241 to 283 (PGFGSLPQPPLTLKPIRPRKYPNRPSKTPLHERPHACPAEGCD) is disordered. Positions 269-283 (PLHERPHACPAEGCD) are enriched in basic and acidic residues. 3 C2H2-type zinc fingers span residues 275 to 299 (HACP…LRIH), 305 to 327 (FQCR…IRTH), and 333 to 355 (FACE…AKIH). The interval 348–387 (RKRHAKIHLKQKEKKSEKGGAPSASSAPTVSLAPVVTTCA) is disordered. Residues 350–360 (RHAKIHLKQKE) are compositionally biased toward basic residues.

This sequence belongs to the EGR C2H2-type zinc-finger protein family.

It localises to the nucleus. Functionally, probable transcription factor involved in muscle spindle development. The sequence is that of Early growth response protein 3 (Egr3) from Mus musculus (Mouse).